Consider the following 515-residue polypeptide: MTLPPQPSRLKPPRNTSSLSLRWRVMLLAMSMVAMVVVLMSVAVYAVVSRALYDDIDNQLHSRARLLIESGSLAADPGKAIEGTAYSDVNAMLVNPGRSIYTANQQGQTLPLGEAEKDVISGELLLSLRTANHQRILAVHLTNGSSLLISKSLAPTGQVLGRLGTVLLIVGGVGVAVAAIAGGMVARAGLRPVGRLTQAAERVARTDDLRPIPVFGSDELARLTEAFNMMLRALTESRERQARLVSDAGHELRTPLTSLRTNVELLMASQAPGAPRLPEEEMAGLRADVIAQIEELSTLVGDLVDLTRDEAGGVVYETVDMAEVVDRSLERVRRRRNDIEFDVNVVGWQVYGDAAGLARAVLNLLDNAAKWSPPGGRVGVRLTQTDPVHAELVVSDQGPGIPEAERRLVFERFYRSTAARAMPGSGLGLAIVKQVVLKHGGALRVEDTVPGGNPPGTSFYVMLPGRPLTPGGNGTAPVPAAQFDPDMRSAGSRADRRVIKNTETNGKSRSASKEL.

At 1-24 (MTLPPQPSRLKPPRNTSSLSLRWR) the chain is on the cytoplasmic side. The helical transmembrane segment at 25 to 45 (VMLLAMSMVAMVVVLMSVAVY) threads the bilayer. Over 46 to 165 (AVVSRALYDD…TGQVLGRLGT (120 aa)) the chain is Extracellular. Residues 166–186 (VLLIVGGVGVAVAAIAGGMVA) traverse the membrane as a helical segment. The region spanning 187-239 (RAGLRPVGRLTQAAERVARTDDLRPIPVFGSDELARLTEAFNMMLRALTESRE) is the HAMP domain. At 187 to 515 (RAGLRPVGRL…GKSRSASKEL (329 aa)) the chain is on the cytoplasmic side. Positions 247–467 (DAGHELRTPL…SFYVMLPGRP (221 aa)) constitute a Histidine kinase domain. His250 carries the post-translational modification Phosphohistidine; by autocatalysis. Residues 468–515 (LTPGGNGTAPVPAAQFDPDMRSAGSRADRRVIKNTETNGKSRSASKEL) are disordered.

Mg(2+) serves as cofactor. Requires Mn(2+) as cofactor. Autophosphorylated.

The protein resides in the cell membrane. It catalyses the reaction ATP + protein L-histidine = ADP + protein N-phospho-L-histidine.. Functionally, member of the two-component regulatory system MprB/MprA which contributes to maintaining a balance among several systems involved in stress resistance and is required for establishment and maintenance of persistent infection in the host. In response to environmental signals MprB acts both as a membrane-associated protein kinase that undergoes autophosphorylation and subsequently transfers the phosphate to MprA, and a protein phosphatase that dephosphorylates phospho-MprA. This Mycobacterium sp. (strain JLS) protein is Signal transduction histidine-protein kinase/phosphatase MprB (mprB).